We begin with the raw amino-acid sequence, 570 residues long: Hydroxylamine reductase (570 aa).

Cys-5, Cys-8, Cys-17, and Cys-23 together coordinate [4Fe-4S] cluster. Hybrid [4Fe-2O-2S] cluster is bound by residues His-266, Glu-290, Cys-334, Cys-425, Cys-453, Cys-478, Glu-513, and Lys-515. Cys-425 carries the cysteine persulfide modification.

Belongs to the HCP family. [4Fe-4S] cluster is required as a cofactor. Hybrid [4Fe-2O-2S] cluster serves as cofactor.

It is found in the cytoplasm. The catalysed reaction is A + NH4(+) + H2O = hydroxylamine + AH2 + H(+). In terms of biological role, catalyzes the reduction of hydroxylamine to form NH(3) and H(2)O. The polypeptide is Hydroxylamine reductase (Clostridium botulinum (strain Loch Maree / Type A3)).